Here is a 404-residue protein sequence, read N- to C-terminus: Arginine biosynthesis bifunctional protein ArgJ (404 aa).

Positions 166, 189, 200, 280, 399, and 404 each coordinate substrate. The Nucleophile role is filled by Thr200.

This sequence belongs to the ArgJ family. As to quaternary structure, heterotetramer of two alpha and two beta chains.

The protein resides in the cytoplasm. The catalysed reaction is N(2)-acetyl-L-ornithine + L-glutamate = N-acetyl-L-glutamate + L-ornithine. It carries out the reaction L-glutamate + acetyl-CoA = N-acetyl-L-glutamate + CoA + H(+). Its pathway is amino-acid biosynthesis; L-arginine biosynthesis; L-ornithine and N-acetyl-L-glutamate from L-glutamate and N(2)-acetyl-L-ornithine (cyclic): step 1/1. The protein operates within amino-acid biosynthesis; L-arginine biosynthesis; N(2)-acetyl-L-ornithine from L-glutamate: step 1/4. In terms of biological role, catalyzes two activities which are involved in the cyclic version of arginine biosynthesis: the synthesis of N-acetylglutamate from glutamate and acetyl-CoA as the acetyl donor, and of ornithine by transacetylation between N(2)-acetylornithine and glutamate. The chain is Arginine biosynthesis bifunctional protein ArgJ from Mycobacterium bovis (strain ATCC BAA-935 / AF2122/97).